The sequence spans 238 residues: Ribonuclease PH (238 aa).

Phosphate contacts are provided by residues R86 and 124-126 (GTR).

Belongs to the RNase PH family. In terms of assembly, homohexameric ring arranged as a trimer of dimers.

It catalyses the reaction tRNA(n+1) + phosphate = tRNA(n) + a ribonucleoside 5'-diphosphate. In terms of biological role, phosphorolytic 3'-5' exoribonuclease that plays an important role in tRNA 3'-end maturation. Removes nucleotide residues following the 3'-CCA terminus of tRNAs; can also add nucleotides to the ends of RNA molecules by using nucleoside diphosphates as substrates, but this may not be physiologically important. Probably plays a role in initiation of 16S rRNA degradation (leading to ribosome degradation) during starvation. This is Ribonuclease PH from Histophilus somni (strain 129Pt) (Haemophilus somnus).